The sequence spans 451 residues: Ubiquitin hydrolase B (451 aa).

The region spanning 19 to 450 is the USP domain; it reads RGLINTSNTC…EAYLLLYQLV (432 aa). The segment covering 83–115 has biased composition (low complexity); it reads NNSNSTTTTSSSSTTATTTSTSNNNKSQTPTSP. The segment at 83–154 is disordered; sequence NNSNSTTTTS…PPINPKHFND (72 aa). The segment covering 116–135 has biased composition (polar residues); sequence IQQHHQSQTNGLSNQPSVAT. The active-site Nucleophile is the His399. His408 serves as the catalytic Proton acceptor.

This sequence belongs to the peptidase C19 family. In terms of assembly, interacts with mkkA (via F-box/WD40 domains).

It catalyses the reaction Thiol-dependent hydrolysis of ester, thioester, amide, peptide and isopeptide bonds formed by the C-terminal Gly of ubiquitin (a 76-residue protein attached to proteins as an intracellular targeting signal).. Functionally, required for proper prespore cell patterning. Plays a role in stabilizing mkkA by preventing it from being targeted for degradation. ubcB and ubpB differentially control ubiquitination/deubiquitination and degradation of mkkA in a cell-type-specific and temporally regulated manner. In Dictyostelium discoideum (Social amoeba), this protein is Ubiquitin hydrolase B (ubpB).